Reading from the N-terminus, the 2161-residue chain is DNA polymerase epsilon catalytic subunit A (2161 aa).

3 short sequence motifs (nuclear localization signal) span residues 5–12 (NRRRDRKD), 1137–1144 (HKKVREKD), and 1239–1246 (LKKRKWKV). Residues C2038, C2041, C2063, and C2068 each coordinate Zn(2+). The CysA-type zinc finger occupies 2038-2068 (CSNCDAYRDLDICRDPALLTEKEWSCADTQC). Residues C2099, C2102, C2114, and C2116 each contribute to the [4Fe-4S] cluster site. The CysB motif signature appears at 2099–2116 (CIRCNQVKAAHLTEQCEC). Positions 2130 to 2137 (SKRMEIFM) match the Nuclear localization signal 4 motif.

It belongs to the DNA polymerase type-B family. As to quaternary structure, heterotetramer. Subunit of the DNA polymerase II. Interacts (via C-terminus) with DPB2. Interacts with LHP1/TFL2. [4Fe-4S] cluster serves as cofactor. In terms of tissue distribution, mostly expressed at low levels in inflorescence (floral meristem and flowers until anthesis), and, to a lower extent, in roots, seeds and leaves.

The protein localises to the nucleus. The catalysed reaction is DNA(n) + a 2'-deoxyribonucleoside 5'-triphosphate = DNA(n+1) + diphosphate. Its function is as follows. DNA polymerase II, which participates in chromosomal DNA replication. Required for the timing and determination of cell fate during plant embryogenesis and root pole development, by promoting cell cycle and cell type patterning. Necessary for proper shoot (SAM) and root apical meristem (RAM) functions. Involved in maintaining epigenetic states, controlling hypersensitive response (HR), and mediating abscisic acid (ABA) signaling. Required for flowering repression through a mechanism involving epigenetic gene silencing. May participate in processes involved in chromatin-mediated cellular memory. The chain is DNA polymerase epsilon catalytic subunit A (POL2A) from Arabidopsis thaliana (Mouse-ear cress).